Consider the following 178-residue polypeptide: ATP synthase subunit b (178 aa).

A helical transmembrane segment spans residues 19–39 (ITGIGFVILLFIAIKYIVPAF).

The protein belongs to the ATPase B chain family. As to quaternary structure, F-type ATPases have 2 components, F(1) - the catalytic core - and F(0) - the membrane proton channel. F(1) has five subunits: alpha(3), beta(3), gamma(1), delta(1), epsilon(1). F(0) has three main subunits: a(1), b(2) and c(10-14). The alpha and beta chains form an alternating ring which encloses part of the gamma chain. F(1) is attached to F(0) by a central stalk formed by the gamma and epsilon chains, while a peripheral stalk is formed by the delta and b chains.

Its subcellular location is the cell membrane. Functionally, f(1)F(0) ATP synthase produces ATP from ADP in the presence of a proton or sodium gradient. F-type ATPases consist of two structural domains, F(1) containing the extramembraneous catalytic core and F(0) containing the membrane proton channel, linked together by a central stalk and a peripheral stalk. During catalysis, ATP synthesis in the catalytic domain of F(1) is coupled via a rotary mechanism of the central stalk subunits to proton translocation. Its function is as follows. Component of the F(0) channel, it forms part of the peripheral stalk, linking F(1) to F(0). This is ATP synthase subunit b from Kocuria rhizophila (strain ATCC 9341 / DSM 348 / NBRC 103217 / DC2201).